Reading from the N-terminus, the 227-residue chain is Ribonuclease 3 (227 aa).

An RNase III domain is found at 4-126; it reads LDRLERKIGY…IIGAMSLDQG (123 aa). Glu39 contributes to the Mg(2+) binding site. Asp43 is a catalytic residue. Positions 112 and 115 each coordinate Mg(2+). Residue Glu115 is part of the active site. In terms of domain architecture, DRBM spans 153 to 226; the sequence is DAKTRLQEYL…AEQILKELDI (74 aa).

The protein belongs to the ribonuclease III family. In terms of assembly, homodimer. It depends on Mg(2+) as a cofactor.

It localises to the cytoplasm. The catalysed reaction is Endonucleolytic cleavage to 5'-phosphomonoester.. In terms of biological role, digests double-stranded RNA. Involved in the processing of primary rRNA transcript to yield the immediate precursors to the large and small rRNAs (23S and 16S). Processes some mRNAs, and tRNAs when they are encoded in the rRNA operon. Processes pre-crRNA and tracrRNA of type II CRISPR loci if present in the organism. The chain is Ribonuclease 3 from Haemophilus influenzae (strain ATCC 51907 / DSM 11121 / KW20 / Rd).